Consider the following 178-residue polypeptide: MDLPGPIHDFILVFLGSGLILGGLGVVLFTNPIYSAFSLGLVLVCISLFYILSNSHFVAAAQLLIYVGAVNVLIIFAVMFMNGSDYSKDFQLNLWTIGDGLTSLVCTSIFFSLITTILDTSWYGIIWTTRANQIIEQDLISNSQQIGIHLSTDFFLPFELVSIILLVALIGAIAVARQ.

The next 5 helical transmembrane spans lie at 10-30 (FILV…VLFT), 32-52 (PIYS…FYIL), 61-81 (AQLL…VMFM), 94-114 (LWTI…FSLI), and 154-174 (FFLP…GAIA).

Belongs to the complex I subunit 6 family. As to quaternary structure, NDH is composed of at least 16 different subunits, 5 of which are encoded in the nucleus.

The protein localises to the plastid. The protein resides in the chloroplast thylakoid membrane. It carries out the reaction a plastoquinone + NADH + (n+1) H(+)(in) = a plastoquinol + NAD(+) + n H(+)(out). It catalyses the reaction a plastoquinone + NADPH + (n+1) H(+)(in) = a plastoquinol + NADP(+) + n H(+)(out). Functionally, NDH shuttles electrons from NAD(P)H:plastoquinone, via FMN and iron-sulfur (Fe-S) centers, to quinones in the photosynthetic chain and possibly in a chloroplast respiratory chain. The immediate electron acceptor for the enzyme in this species is believed to be plastoquinone. Couples the redox reaction to proton translocation, and thus conserves the redox energy in a proton gradient. The chain is NAD(P)H-quinone oxidoreductase subunit 6, chloroplastic (ndhG) from Citrus sinensis (Sweet orange).